Reading from the N-terminus, the 241-residue chain is DNA-binding dual master transcriptional regulator RpaA (241 aa).

The Response regulatory domain maps to 3 to 119; it reads RILIIDDDPA…EMLARVRALL (117 aa). The residue at position 52 (Asp52) is a 4-aspartylphosphate. Positions 132–231 form a DNA-binding region, ompR/PhoB-type; the sequence is SEILNQGPLT…VYGAGYCLEL (100 aa).

In terms of assembly, interacts with reduced ferredoxin (petF). Interacts with CikA, RpaB, SasA, Sll0038 (pixG) and a number of other proteins. In terms of processing, phosphorylated by SasA; phosphorylation is maximal when KaiC phosphorylation is active during the circadian cycle. Dephosphorylated by CikA. CikA and SasA cooperation generates RpaA activity oscillation that is distinct from that generated by CikA or SasA alone and offset from the rhythm of KaiC phosphorylation.

It is found in the cytoplasm. Its function is as follows. Response regulator of 2 two-component regulatory systems SasA/RpaA and CikA/RpaA involved in genome-wide circadian gene expression. The histidine kinases have opposing effects modulated by the clock oscillator proteins; SasA phosphorylates RpaA (stimulated by fully phosphorylated KaiC1) while CikA dephosphorylates phospho-RpaA (stimulated by the phospho-Ser-432-KaiC1-KaiB complex). Functionally, the RpaA regulon is about 300 genes, and includes itself, cikA, sigE, sigG, genes involved in photosynthesis, carbon metabolism in the light and dark, phototaxis, CRISPR arrays 2 and 3 as well as nearly 90 ncRNAs. Genes are up- or down-regulated in its absence. Involved in regulation of primary sugar and amino acid metabolism and in adaptation to light changes. Regulates the accumulation of the monomeric photosystem I and the D1 protein under high light conditions. Overexpression causes cells to grow more slowly, increases levels of transcripts for clock oscillator genes in the light and the dark, increases levels of SigE protein, increases accumulation of sugar catabolic enzymes in the dark with concomitant decreases in most sugar metabolites. Plays a role in cell division; overexpression from the psbAII promoter increases expression of some cell-division-related genes, alters cell volume and changes the outer cell membrane and cell wall appearance. The polypeptide is DNA-binding dual master transcriptional regulator RpaA (Synechocystis sp. (strain ATCC 27184 / PCC 6803 / Kazusa)).